Reading from the N-terminus, the 335-residue chain is Peflin (335 aa).

Over residues 23-37 (AMEETRREFEKEKQR) the composition is skewed to basic and acidic residues. A disordered region spans residues 23–92 (AMEETRREFE…SPRHTKTPVD (70 aa)). Polar residues predominate over residues 43–53 (VTQAQTPNTRV). 5 EF-hand domains span residues 144–192 (KVAP…DDNS), 198–223 (SVDA…IALY), 224–259 (KRVK…LGYL), 260–300 (IPFE…LMRL), and 301–332 (TKLF…LGRF). Ca(2+) contacts are provided by D170, R176, and E181. Ca(2+) contacts are provided by D237, N239, S241, T243, and E248.

Homodimer.

It is found in the cytoplasm. Its subcellular location is the nucleus. It localises to the bud tip. The protein resides in the bud neck. Calcium-binding protein that is required for polar bud growth and cell wall abscission. Can also bind zinc ions. This chain is Peflin (PEF1), found in Saccharomyces cerevisiae (strain ATCC 204508 / S288c) (Baker's yeast).